A 273-amino-acid polypeptide reads, in one-letter code: MSTPGTLHIVATPIGNLGDLSPRAQHILRTVTMICAEDTRHTRQLLAHFGIERPLLALHAHNEDTLAERIITRLISGESLALVSDAGTPLISDPGFLLVRAARAAGIRVTPVPGPSALIAALSVSGLPSNRFTFEGFLPAKPTARRDRLTHLAHEPRTLIFYEASHRIAECLTDLATIFGSMRIAVVARELTKIFETVLDGTLATLQTQVANDENQRKGEFVIIVQGAADQDAAKITEGRRIYALLKEHLPPSSAAKLAAEITGAPRKALYGG.

This sequence belongs to the methyltransferase superfamily. RsmI family.

The protein localises to the cytoplasm. It carries out the reaction cytidine(1402) in 16S rRNA + S-adenosyl-L-methionine = 2'-O-methylcytidine(1402) in 16S rRNA + S-adenosyl-L-homocysteine + H(+). Functionally, catalyzes the 2'-O-methylation of the ribose of cytidine 1402 (C1402) in 16S rRNA. In Xylella fastidiosa (strain Temecula1 / ATCC 700964), this protein is Ribosomal RNA small subunit methyltransferase I.